A 115-amino-acid chain; its full sequence is Nucleoid-associated protein alr5067 (115 aa).

This sequence belongs to the YbaB/EbfC family. Homodimer.

Its subcellular location is the cytoplasm. It is found in the nucleoid. In terms of biological role, binds to DNA and alters its conformation. May be involved in regulation of gene expression, nucleoid organization and DNA protection. The protein is Nucleoid-associated protein alr5067 of Nostoc sp. (strain PCC 7120 / SAG 25.82 / UTEX 2576).